A 148-amino-acid chain; its full sequence is MLTFTQLKPPNGDATVTFTLALTAEERTRSRHRFETEDGKVVFLHLPRGTVLHDGDILLEETHNSLIRIIAKPELVVTAFAQTPLLLLRAAYHLGNRHVPVEITPTYLRFSSDSVLRAMLEQLGLEVKEEILPFQPELGAYGQHHHAH.

It belongs to the UreE family.

It is found in the cytoplasm. In terms of biological role, involved in urease metallocenter assembly. Binds nickel. Probably functions as a nickel donor during metallocenter assembly. The chain is Urease accessory protein UreE from Nostoc punctiforme (strain ATCC 29133 / PCC 73102).